The sequence spans 261 residues: Kallikrein-1 (261 aa).

The signal sequence occupies residues 1-18 (MWFLILFLALSLGRNDAA). A propeptide spans 19 to 24 (PPVQSR) (activation peptide). One can recognise a Peptidase S1 domain in the interval 25-258 (VVGGYNCEMN…FTPWIKEVMK (234 aa)). Disulfide bonds link Cys-31/Cys-173, Cys-50/Cys-66, Cys-152/Cys-219, Cys-184/Cys-198, and Cys-209/Cys-234. His-65 (charge relay system) is an active-site residue. Residue Asn-108 is glycosylated (N-linked (GlcNAc...) asparagine). The Charge relay system role is filled by Asp-120. Catalysis depends on Ser-213, which acts as the Charge relay system.

The protein belongs to the peptidase S1 family. Kallikrein subfamily. As to expression, high levels in pancreas, submaxillary and parotid glands, spleen, and kidney.

It catalyses the reaction Preferential cleavage of Arg-|-Xaa bonds in small molecule substrates. Highly selective action to release kallidin (lysyl-bradykinin) from kininogen involves hydrolysis of Met-|-Xaa or Leu-|-Xaa.. The chain is Kallikrein-1 (Ngfg) from Rattus norvegicus (Rat).